Consider the following 407-residue polypeptide: 1-deoxy-D-xylulose 5-phosphate reductoisomerase (407 aa).

NADPH contacts are provided by Thr25, Gly26, Ser27, Ile28, Asn53, and Asn136. Lys137 provides a ligand contact to 1-deoxy-D-xylulose 5-phosphate. NADPH is bound at residue Glu138. Asp162 provides a ligand contact to Mn(2+). The 1-deoxy-D-xylulose 5-phosphate site is built by Ser163, Glu164, Ser188, and His211. Glu164 contacts Mn(2+). Gly217 serves as a coordination point for NADPH. 1-deoxy-D-xylulose 5-phosphate contacts are provided by Ser224, Asn229, Lys230, and Glu233. Glu233 contacts Mn(2+).

The protein belongs to the DXR family. It depends on Mg(2+) as a cofactor. Requires Mn(2+) as cofactor.

It carries out the reaction 2-C-methyl-D-erythritol 4-phosphate + NADP(+) = 1-deoxy-D-xylulose 5-phosphate + NADPH + H(+). It participates in isoprenoid biosynthesis; isopentenyl diphosphate biosynthesis via DXP pathway; isopentenyl diphosphate from 1-deoxy-D-xylulose 5-phosphate: step 1/6. In terms of biological role, catalyzes the NADPH-dependent rearrangement and reduction of 1-deoxy-D-xylulose-5-phosphate (DXP) to 2-C-methyl-D-erythritol 4-phosphate (MEP). The chain is 1-deoxy-D-xylulose 5-phosphate reductoisomerase from Rhodopseudomonas palustris (strain BisA53).